The sequence spans 158 residues: Protein-export protein SecB (158 aa).

It belongs to the SecB family. As to quaternary structure, homotetramer, a dimer of dimers. One homotetramer interacts with 1 SecA dimer.

Its subcellular location is the cytoplasm. In terms of biological role, one of the proteins required for the normal export of preproteins out of the cell cytoplasm. It is a molecular chaperone that binds to a subset of precursor proteins, maintaining them in a translocation-competent state. It also specifically binds to its receptor SecA. This chain is Protein-export protein SecB, found in Rhodopseudomonas palustris (strain BisB5).